A 157-amino-acid chain; its full sequence is Mitochondrial inner membrane protease subunit 1 (157 aa).

Active-site residues include S35 and K80.

Belongs to the peptidase S26 family. IMP1 subfamily. In terms of assembly, heterodimer of 2 subunits, imp1 and imp2.

Its subcellular location is the mitochondrion inner membrane. In terms of biological role, catalyzes the removal of transit peptides required for the targeting of proteins from the mitochondrial matrix, across the inner membrane, into the inter-membrane space. The sequence is that of Mitochondrial inner membrane protease subunit 1 (imp1) from Schizosaccharomyces pombe (strain 972 / ATCC 24843) (Fission yeast).